A 157-amino-acid chain; its full sequence is Endoribonuclease YbeY (157 aa).

Residues H118, H122, and H128 each coordinate Zn(2+).

Belongs to the endoribonuclease YbeY family. Requires Zn(2+) as cofactor.

Its subcellular location is the cytoplasm. Its function is as follows. Single strand-specific metallo-endoribonuclease involved in late-stage 70S ribosome quality control and in maturation of the 3' terminus of the 16S rRNA. The protein is Endoribonuclease YbeY of Bordetella parapertussis (strain 12822 / ATCC BAA-587 / NCTC 13253).